A 283-amino-acid polypeptide reads, in one-letter code: Formamidopyrimidine-DNA glycosylase (283 aa).

P2 acts as the Schiff-base intermediate with DNA in catalysis. E3 acts as the Proton donor in catalysis. Catalysis depends on K58, which acts as the Proton donor; for beta-elimination activity. The DNA site is built by H100, R119, and R162. An FPG-type zinc finger spans residues 247–283 (RVYGREGQPCVTPGCRGLVGRIVQSGRSSFHCPECQR). Catalysis depends on R273, which acts as the Proton donor; for delta-elimination activity.

It belongs to the FPG family. Monomer. Zn(2+) is required as a cofactor.

The catalysed reaction is Hydrolysis of DNA containing ring-opened 7-methylguanine residues, releasing 2,6-diamino-4-hydroxy-5-(N-methyl)formamidopyrimidine.. It catalyses the reaction 2'-deoxyribonucleotide-(2'-deoxyribose 5'-phosphate)-2'-deoxyribonucleotide-DNA = a 3'-end 2'-deoxyribonucleotide-(2,3-dehydro-2,3-deoxyribose 5'-phosphate)-DNA + a 5'-end 5'-phospho-2'-deoxyribonucleoside-DNA + H(+). Its function is as follows. Involved in base excision repair of DNA damaged by oxidation or by mutagenic agents. Acts as a DNA glycosylase that recognizes and removes damaged bases. Has a preference for oxidized purines, such as 7,8-dihydro-8-oxoguanine (8-oxoG). Has AP (apurinic/apyrimidinic) lyase activity and introduces nicks in the DNA strand. Cleaves the DNA backbone by beta-delta elimination to generate a single-strand break at the site of the removed base with both 3'- and 5'-phosphates. In Cereibacter sphaeroides (strain ATCC 17025 / ATH 2.4.3) (Rhodobacter sphaeroides), this protein is Formamidopyrimidine-DNA glycosylase.